Here is a 100-residue protein sequence, read N- to C-terminus: Succinate dehydrogenase assembly factor 4, mitochondrial (100 aa).

A mitochondrion-targeting transit peptide spans 1–31 (MFNRNLRAVILKNYNKALTRCLHDAGNLKRP). A disordered region spans residues 24-100 (DAGNLKRPTP…YSYEGRVTDF (77 aa)). Basic and acidic residues-rich tracts occupy residues 36 to 68 (LPKE…KDFE) and 85 to 100 (PTVH…VTDF).

The protein belongs to the SDHAF4 family. Interacts with sdh1 in its FAD-bound form.

The protein resides in the mitochondrion matrix. Its function is as follows. Plays an essential role in the assembly of succinate dehydrogenase (SDH), an enzyme complex (also referred to as respiratory complex II) that is a component of both the tricarboxylic acid (TCA) cycle and the mitochondrial electron transport chain, and which couples the oxidation of succinate to fumarate with the reduction of ubiquinone (coenzyme Q) to ubiquinol. Binds to the flavoprotein subunit sdh1 in its FAD-bound form, blocking the generation of excess reactive oxygen species (ROS) and facilitating its assembly with the iron-sulfur protein subunit sdh2 into the SDH catalytic dimer. The polypeptide is Succinate dehydrogenase assembly factor 4, mitochondrial (Schizosaccharomyces pombe (strain 972 / ATCC 24843) (Fission yeast)).